The chain runs to 316 residues: MNELDGIKQFTTVVADSGDIESIRHYHPQDATTNPSLLLKAAGLSQYEHLIDDAIAWGKKNGKTQEQQVVAACDKLAVNFGAEILKIVPGRVSTEVDARLSFDKEKSIEKARHLVDLYQQQGVEKSRILIKLASTWEGIRAAEELEKEGINCNLTLLFSFAQARACAEAGVFLISPFVGRIYDWYQARKPMDPYVVEEDPGVKSVRNIYDYYKQHHYETIVMGASFRRTEQILALTGCDRLTIAPNLLKELQEKVSPVVRKLIPPSQTFPRPAPMSEAEFRWEHNQYAMAVEKLSEGIRLFAVDQRKLEDLLAAKL.

Lysine 131 serves as the catalytic Schiff-base intermediate with substrate.

It belongs to the transaldolase family. Type 1 subfamily. As to quaternary structure, homodimer.

It localises to the cytoplasm. It carries out the reaction D-sedoheptulose 7-phosphate + D-glyceraldehyde 3-phosphate = D-erythrose 4-phosphate + beta-D-fructose 6-phosphate. It participates in carbohydrate degradation; pentose phosphate pathway; D-glyceraldehyde 3-phosphate and beta-D-fructose 6-phosphate from D-ribose 5-phosphate and D-xylulose 5-phosphate (non-oxidative stage): step 2/3. Transaldolase is important for the balance of metabolites in the pentose-phosphate pathway. The sequence is that of Transaldolase 2 from Shigella sonnei (strain Ss046).